The chain runs to 221 residues: Stromal cell-derived factor 2-like protein 1 (221 aa).

Positions 1-28 (MWGASRGRVAGPTLLGLLLALSVRSGGA) are cleaved as a signal peptide. MIR domains lie at 33-87 (AGLV…IRGG), 95-150 (GLPV…VRCS), and 151-205 (GQHW…AMEG). Residue S215 is modified to Phosphoserine. The Prevents secretion from ER signature appears at 218–221 (HDEL).

Ubiquitously expressed with high expression in the testis, ovary, uterus, and low expression in heart and skeletal muscle.

It localises to the endoplasmic reticulum lumen. This is Stromal cell-derived factor 2-like protein 1 (Sdf2l1) from Mus musculus (Mouse).